A 249-amino-acid chain; its full sequence is 1-(5-phosphoribosyl)-5-[(5-phosphoribosylamino)methylideneamino] imidazole-4-carboxamide isomerase (249 aa).

The active-site Proton acceptor is the aspartate 8. Aspartate 131 (proton donor) is an active-site residue.

Belongs to the HisA/HisF family.

The protein localises to the cytoplasm. It carries out the reaction 1-(5-phospho-beta-D-ribosyl)-5-[(5-phospho-beta-D-ribosylamino)methylideneamino]imidazole-4-carboxamide = 5-[(5-phospho-1-deoxy-D-ribulos-1-ylimino)methylamino]-1-(5-phospho-beta-D-ribosyl)imidazole-4-carboxamide. It functions in the pathway amino-acid biosynthesis; L-histidine biosynthesis; L-histidine from 5-phospho-alpha-D-ribose 1-diphosphate: step 4/9. The chain is 1-(5-phosphoribosyl)-5-[(5-phosphoribosylamino)methylideneamino] imidazole-4-carboxamide isomerase from Nitrosomonas europaea (strain ATCC 19718 / CIP 103999 / KCTC 2705 / NBRC 14298).